The primary structure comprises 219 residues: Transcriptional regulatory protein QseB (219 aa).

A Response regulatory domain is found at R2–V116. The residue at position 51 (D51) is a 4-aspartylphosphate. Residues S124–D218 constitute a DNA-binding region (ompR/PhoB-type).

In terms of processing, phosphorylated by QseC.

The protein localises to the cytoplasm. In terms of biological role, member of a two-component regulatory system QseB/QseC. Activates the flagella regulon by activating transcription of flhDC. This chain is Transcriptional regulatory protein QseB (qseB), found in Salmonella typhimurium (strain LT2 / SGSC1412 / ATCC 700720).